Reading from the N-terminus, the 357-residue chain is N-acetyl-gamma-glutamyl-phosphate reductase (357 aa).

Cys-160 is a catalytic residue.

This sequence belongs to the NAGSA dehydrogenase family. Type 1 subfamily.

The protein resides in the cytoplasm. It carries out the reaction N-acetyl-L-glutamate 5-semialdehyde + phosphate + NADP(+) = N-acetyl-L-glutamyl 5-phosphate + NADPH + H(+). It participates in amino-acid biosynthesis; L-arginine biosynthesis; N(2)-acetyl-L-ornithine from L-glutamate: step 3/4. Functionally, catalyzes the NADPH-dependent reduction of N-acetyl-5-glutamyl phosphate to yield N-acetyl-L-glutamate 5-semialdehyde. This chain is N-acetyl-gamma-glutamyl-phosphate reductase, found in Synechococcus sp. (strain CC9605).